We begin with the raw amino-acid sequence, 381 residues long: Glycerate kinase (381 aa).

The protein belongs to the glycerate kinase type-1 family.

The enzyme catalyses (R)-glycerate + ATP = (2R)-3-phosphoglycerate + ADP + H(+). The polypeptide is Glycerate kinase (glxK) (Bacillus cereus (strain ATCC 10987 / NRS 248)).